The sequence spans 168 residues: Transcription antitermination protein NusB (168 aa).

This sequence belongs to the NusB family.

Involved in transcription antitermination. Required for transcription of ribosomal RNA (rRNA) genes. Binds specifically to the boxA antiterminator sequence of the ribosomal RNA (rrn) operons. In Prosthecochloris aestuarii (strain DSM 271 / SK 413), this protein is Transcription antitermination protein NusB.